A 350-amino-acid polypeptide reads, in one-letter code: Protein MGF 360-12L (350 aa).

Residues 57-89 (DLNTALVKAVRENNYNLIKLFAEWGANINYGLV) form an ANK repeat.

The protein belongs to the asfivirus MGF 360 family.

Functionally, plays a role in virus cell tropism, and may be required for efficient virus replication in macrophages. The protein is Protein MGF 360-12L of African swine fever virus (isolate Warthog/Namibia/Wart80/1980) (ASFV).